Consider the following 231-residue polypeptide: NADH-ubiquinone oxidoreductase chain 4 (231 aa).

The next 7 helical transmembrane spans lie at 1–21 (PIAGSMVLAAILLKLGGYGMI), 34–54 (MFIPFITLSLWGAVLANLTCL), 62–82 (LIAYSSISHMGLVVAAISIQT), 86–106 (LSGAMALMIAHGFTSSALFCL), 118–138 (ILILTRGFHNILPMTTTWWLL), 169–189 (TIILLSLSILITSIYSLHIFL), and 211–231 (LLMTLHIIPLILLSMKPELVM).

This sequence belongs to the complex I subunit 4 family.

It localises to the mitochondrion membrane. The catalysed reaction is a ubiquinone + NADH + 5 H(+)(in) = a ubiquinol + NAD(+) + 4 H(+)(out). Its function is as follows. Core subunit of the mitochondrial membrane respiratory chain NADH dehydrogenase (Complex I) that is believed to belong to the minimal assembly required for catalysis. Complex I functions in the transfer of electrons from NADH to the respiratory chain. The immediate electron acceptor for the enzyme is believed to be ubiquinone. This chain is NADH-ubiquinone oxidoreductase chain 4 (MT-ND4), found in Causus rhombeatus (Rhombic night adder).